The sequence spans 87 residues: Kappa-2-bungarotoxin (87 aa).

An N-terminal signal peptide occupies residues 1–21 (MKTLLLTLVVVTIVCLDLGYT). Intrachain disulfides connect Cys24–Cys42, Cys35–Cys63, Cys48–Cys52, Cys67–Cys79, and Cys80–Cys85.

Belongs to the three-finger toxin family. Long-chain subfamily. Kappa-neurotoxin sub-subfamily. Homodimer and heterodimer with kappa 3-bungarotoxin; non-covalently linked. Expressed by the venom gland.

Its subcellular location is the secreted. Functionally, postsynaptic neurotoxin that binds and inhibits neuronal nicotinic acetylcholine receptors (nAChR) with high affinity (IC(50)&lt;100 nM). Is a selective, and slowly reversible antagonist of alpha-3/CHRNA3-containing and some alpha-4/CHRNA4-containing AChRs. This chain is Kappa-2-bungarotoxin, found in Bungarus multicinctus (Many-banded krait).